The chain runs to 565 residues: Estrogen receptor gamma (565 aa).

The modulating stretch occupies residues 1–168 (MAVASSPEKD…TSGGKTDLHY (168 aa)). NR C4-type zinc fingers lie at residues 169-189 (CAVC…CEGC) and 205-229 (CPAT…LRKC). Residues 169–234 (CAVCHDYASG…RLRKCYEVGM (66 aa)) constitute a DNA-binding region (nuclear receptor). Residues 235-285 (TKCGMRKERGNYRSPQMRRMTRLTSQGRTDSSSVLTGSAVVSLNAPQPSAL) are hinge. The 231-residue stretch at 286–516 (TSEQLIERLM…DLLLEMLDAH (231 aa)) folds into the NR LBD domain. Residues 522-565 (RLPRRSPEQEPEDQADAPAPPHSSGSGPSYTWTPSSSEGAGEPQ) are disordered.

It belongs to the nuclear hormone receptor family. NR3 subfamily. Homodimer. Abundant in the ovary and testes, barely detectable in the brain and muscle and undetectable in the liver.

The protein localises to the nucleus. In terms of biological role, the steroid hormones and their receptors are involved in the regulation of eukaryotic gene expression and affect cellular proliferation and differentiation in target tissues. This Micropogonias undulatus (Atlantic croaker) protein is Estrogen receptor gamma (esr3).